Here is a 274-residue protein sequence, read N- to C-terminus: MTFLDKLATAQQTNGSLLCVGLDPEPAKFPGQLKGDASRIYDFCARIVDATAGLVIAFKPQIAYFAAHRAEAQLEQLMEHMRRNAPGVPVILDAKRGDIGSTAEQYAIEAFERYGADAVTLSPFMGFDSVAPYLKHQGKGAFLLCRTSNPGGSDLQGQRLAGIEGQPFLYEHVARLAQGPWNLNGQLGLVVGATYPAEIERVRELAPTVPLLIPGVGAQGGDAVATVRAGWRPDAPIIVNSSRAIIYASSGDDFAEAAQKAARSTRDALEAAKP.

The active-site Proton donor is the Lys-95.

Belongs to the OMP decarboxylase family. Type 2 subfamily.

It catalyses the reaction orotidine 5'-phosphate + H(+) = UMP + CO2. It participates in pyrimidine metabolism; UMP biosynthesis via de novo pathway; UMP from orotate: step 2/2. The protein is Orotidine 5'-phosphate decarboxylase of Variovorax paradoxus (strain S110).